Consider the following 249-residue polypeptide: Triosephosphate isomerase (249 aa).

9-11 provides a ligand contact to substrate; it reads NWK. H94 (electrophile) is an active-site residue. The active-site Proton acceptor is E166. Residues G172 and 232–233 each bind substrate; that span reads GG.

The protein belongs to the triosephosphate isomerase family. As to quaternary structure, homodimer.

The protein resides in the cytoplasm. It catalyses the reaction D-glyceraldehyde 3-phosphate = dihydroxyacetone phosphate. It functions in the pathway carbohydrate biosynthesis; gluconeogenesis. Its pathway is carbohydrate degradation; glycolysis; D-glyceraldehyde 3-phosphate from glycerone phosphate: step 1/1. In terms of biological role, involved in the gluconeogenesis. Catalyzes stereospecifically the conversion of dihydroxyacetone phosphate (DHAP) to D-glyceraldehyde-3-phosphate (G3P). In Xylella fastidiosa (strain M12), this protein is Triosephosphate isomerase.